Reading from the N-terminus, the 613-residue chain is Dihydroxy-acid dehydratase (613 aa).

Residue Asp-81 participates in Mg(2+) binding. [2Fe-2S] cluster is bound at residue Cys-122. Asp-123 and Lys-124 together coordinate Mg(2+). Lys-124 bears the N6-carboxylysine mark. Position 193 (Cys-193) interacts with [2Fe-2S] cluster. Residue Glu-489 participates in Mg(2+) binding. The active-site Proton acceptor is the Ser-515.

This sequence belongs to the IlvD/Edd family. Homodimer. The cofactor is [2Fe-2S] cluster. Mg(2+) serves as cofactor.

It catalyses the reaction (2R)-2,3-dihydroxy-3-methylbutanoate = 3-methyl-2-oxobutanoate + H2O. It carries out the reaction (2R,3R)-2,3-dihydroxy-3-methylpentanoate = (S)-3-methyl-2-oxopentanoate + H2O. The protein operates within amino-acid biosynthesis; L-isoleucine biosynthesis; L-isoleucine from 2-oxobutanoate: step 3/4. It participates in amino-acid biosynthesis; L-valine biosynthesis; L-valine from pyruvate: step 3/4. Functions in the biosynthesis of branched-chain amino acids. Catalyzes the dehydration of (2R,3R)-2,3-dihydroxy-3-methylpentanoate (2,3-dihydroxy-3-methylvalerate) into 2-oxo-3-methylpentanoate (2-oxo-3-methylvalerate) and of (2R)-2,3-dihydroxy-3-methylbutanoate (2,3-dihydroxyisovalerate) into 2-oxo-3-methylbutanoate (2-oxoisovalerate), the penultimate precursor to L-isoleucine and L-valine, respectively. The sequence is that of Dihydroxy-acid dehydratase from Pseudomonas putida (strain ATCC 700007 / DSM 6899 / JCM 31910 / BCRC 17059 / LMG 24140 / F1).